A 497-amino-acid chain; its full sequence is Bloodstream-specific protein 2 (497 aa).

The N-terminal stretch at 1-14 (MRAIFLVALALATM) is a signal peptide. The Thioredoxin 1 domain occupies 15–124 (RESTAESLKL…IIKYIKANVG (110 aa)). Asn-30 is a glycosylation site (N-linked (GlcNAc...) asparagine). A disulfide bridge connects residues Cys-48 and Cys-51. N-linked (GlcNAc...) asparagine glycosylation is found at Asn-63, Asn-85, Asn-153, Asn-154, Asn-250, and Asn-278. The Thioredoxin 2 domain maps to 334-455 (EPTIKSLPVP…VYEFVRKHVT (122 aa)). Catalysis depends on nucleophile residues Cys-378 and Cys-381. Cys-378 and Cys-381 form a disulfide bridge. 6 N-linked (GlcNAc...) asparagine glycosylation sites follow: Asn-413, Asn-465, Asn-476, Asn-482, Asn-485, and Asn-488. The segment at 461–497 (EKPANVTEEKKSEEENKSSKSNESNDSNESNVDKQDL) is disordered. A compositionally biased stretch (basic and acidic residues) spans 467–480 (TEEKKSEEENKSSK). Residues 481–490 (SNESNDSNES) show a composition bias toward low complexity.

This sequence belongs to the protein disulfide isomerase family.

This Trypanosoma brucei brucei protein is Bloodstream-specific protein 2 (BS2).